Consider the following 486-residue polypeptide: Surface lipoprotein assembly modifier (486 aa).

The first 29 residues, 1 to 29, serve as a signal peptide directing secretion; that stretch reads MKNGVKQISFLSLIGLSLIGLSLTNIAWA. Residues 30–197 form an N-terminal domain region; that stretch reads KVARPKNDTL…QYLLTLNQRN (168 aa). The segment at 198–486 is C-terminal probable beta barrel; sequence QWIWQVGLNF…RIYLEIGKIF (289 aa). Transmembrane regions (beta stranded) follow at residues 199 to 209, 237 to 248, 253 to 262, 276 to 286, 290 to 300, 320 to 330, 334 to 344, 358 to 367, 373 to 382, 395 to 404, 409 to 419, 437 to 446, 453 to 463, and 476 to 486; these read WIWQVGLNFLN, GRVFFISRKKWP, FFSKTMFNGN, TLRIGGGLGYQ, VEVSLFPFQEK, LGIRLENVDWL, WQISTALEYGE, YFISSTLFYL, FWFVGMDFHR, KTLRLGWGQD, ISSRLTFSYAN, YATTITLWHR, LTPKLSWDYQK, and NRIYLEIGKIF.

Belongs to the Slam family.

It is found in the cell outer membrane. Functionally, required for correct export to the cell surface of some cell outer membrane lipoproteins (tested with TpbP) upon heterologous expression in E.coli and probably also in Haemophilus. This chain is Surface lipoprotein assembly modifier, found in Haemophilus influenzae (strain 86-028NP).